The primary structure comprises 367 residues: UDP-N-acetylglucosamine--N-acetylmuramyl-(pentapeptide) pyrophosphoryl-undecaprenol N-acetylglucosamine transferase (367 aa).

UDP-N-acetyl-alpha-D-glucosamine is bound by residues 13-15, Asn-127, Arg-168, Ser-200, Ile-251, and Gln-296; that span reads TGG.

This sequence belongs to the glycosyltransferase 28 family. MurG subfamily.

The protein resides in the cell inner membrane. The enzyme catalyses di-trans,octa-cis-undecaprenyl diphospho-N-acetyl-alpha-D-muramoyl-L-alanyl-D-glutamyl-meso-2,6-diaminopimeloyl-D-alanyl-D-alanine + UDP-N-acetyl-alpha-D-glucosamine = di-trans,octa-cis-undecaprenyl diphospho-[N-acetyl-alpha-D-glucosaminyl-(1-&gt;4)]-N-acetyl-alpha-D-muramoyl-L-alanyl-D-glutamyl-meso-2,6-diaminopimeloyl-D-alanyl-D-alanine + UDP + H(+). The protein operates within cell wall biogenesis; peptidoglycan biosynthesis. Cell wall formation. Catalyzes the transfer of a GlcNAc subunit on undecaprenyl-pyrophosphoryl-MurNAc-pentapeptide (lipid intermediate I) to form undecaprenyl-pyrophosphoryl-MurNAc-(pentapeptide)GlcNAc (lipid intermediate II). The polypeptide is UDP-N-acetylglucosamine--N-acetylmuramyl-(pentapeptide) pyrophosphoryl-undecaprenol N-acetylglucosamine transferase (Flavobacterium psychrophilum (strain ATCC 49511 / DSM 21280 / CIP 103535 / JIP02/86)).